The chain runs to 205 residues: Large ribosomal subunit protein uL3 (205 aa).

Residues 126 to 150 (GGPKTHGQSDRHRAPGSIGSTTTPG) form a disordered region.

It belongs to the universal ribosomal protein uL3 family. As to quaternary structure, part of the 50S ribosomal subunit. Forms a cluster with proteins L14 and L19.

One of the primary rRNA binding proteins, it binds directly near the 3'-end of the 23S rRNA, where it nucleates assembly of the 50S subunit. In Dehalococcoides mccartyi (strain ATCC BAA-2100 / JCM 16839 / KCTC 5957 / BAV1), this protein is Large ribosomal subunit protein uL3.